Here is a 238-residue protein sequence, read N- to C-terminus: Carboxymethylenebutenolidase (238 aa).

Active-site residues include cysteine 123, aspartate 171, and histidine 201.

It belongs to the dienelactone hydrolase family. In terms of assembly, monomer.

It catalyses the reaction 2-(5-oxo-2,5-dihydrofuran-2-ylidene)acetate + H2O = 4-oxohex-2-enedioate + H(+). It functions in the pathway aromatic compound metabolism; 3-chlorocatechol degradation. Its function is as follows. Ring cleavage of cyclic ester dienelactone to produce maleylacetate. The chain is Carboxymethylenebutenolidase (tcbE) from Pseudomonas sp. (strain P51).